The chain runs to 361 residues: 3-dehydroquinate synthase (361 aa).

Residues 60–65, 94–98, 118–119, K131, and K140 each bind NAD(+); these read DAEAAK, GATTD, and TT. Zn(2+) is bound by residues E173, H242, and H258.

This sequence belongs to the sugar phosphate cyclases superfamily. Dehydroquinate synthase family. Co(2+) serves as cofactor. It depends on Zn(2+) as a cofactor. Requires NAD(+) as cofactor.

It is found in the cytoplasm. The catalysed reaction is 7-phospho-2-dehydro-3-deoxy-D-arabino-heptonate = 3-dehydroquinate + phosphate. It participates in metabolic intermediate biosynthesis; chorismate biosynthesis; chorismate from D-erythrose 4-phosphate and phosphoenolpyruvate: step 2/7. In terms of biological role, catalyzes the conversion of 3-deoxy-D-arabino-heptulosonate 7-phosphate (DAHP) to dehydroquinate (DHQ). This chain is 3-dehydroquinate synthase, found in Cutibacterium acnes (strain DSM 16379 / KPA171202) (Propionibacterium acnes).